The following is a 197-amino-acid chain: Probable 26S proteasome non-ATPase regulatory subunit 9 (197 aa).

In terms of domain architecture, PDZ spans 75 to 166 (KIVVEMENEN…KIIRVTVIRE (92 aa)).

This sequence belongs to the proteasome subunit p27 family.

Acts as a chaperone during the assembly of the 26S proteasome, specifically of the base subcomplex of the 19S regulatory complex (RC). The chain is Probable 26S proteasome non-ATPase regulatory subunit 9 (psmd-9) from Caenorhabditis elegans.